The sequence spans 341 residues: Anthranilate phosphoribosyltransferase (341 aa).

5-phospho-alpha-D-ribose 1-diphosphate contacts are provided by residues Gly-83, 86 to 87 (GD), Thr-91, 93 to 96 (NIST), 111 to 119 (KHGNRGVSS), and Ser-123. Gly-83 lines the anthranilate pocket. Residue Ser-95 coordinates Mg(2+). An anthranilate-binding site is contributed by Asn-114. Position 169 (Arg-169) interacts with anthranilate. Residues Asp-228 and Glu-229 each contribute to the Mg(2+) site.

This sequence belongs to the anthranilate phosphoribosyltransferase family. As to quaternary structure, homodimer. It depends on Mg(2+) as a cofactor.

It catalyses the reaction N-(5-phospho-beta-D-ribosyl)anthranilate + diphosphate = 5-phospho-alpha-D-ribose 1-diphosphate + anthranilate. It functions in the pathway amino-acid biosynthesis; L-tryptophan biosynthesis; L-tryptophan from chorismate: step 2/5. Catalyzes the transfer of the phosphoribosyl group of 5-phosphorylribose-1-pyrophosphate (PRPP) to anthranilate to yield N-(5'-phosphoribosyl)-anthranilate (PRA). This is Anthranilate phosphoribosyltransferase from Cupriavidus necator (strain ATCC 17699 / DSM 428 / KCTC 22496 / NCIMB 10442 / H16 / Stanier 337) (Ralstonia eutropha).